A 305-amino-acid chain; its full sequence is Tetraspanin-12 (305 aa).

At 1–12 the chain is on the cytoplasmic side; sequence MAREDSVKCLRC. 2 S-palmitoyl cysteine lipidation sites follow: Cys9 and Cys12. Residues 13 to 33 form a helical membrane-spanning segment; sequence LLYALNLLFWLMSISVLAVSA. Topologically, residues 34–59 are extracellular; that stretch reads WMRDYLNNVLTLTAETRVEEAVILTY. The helical transmembrane segment at 60–80 threads the bilayer; sequence FPVVHPVMIAVCCFLIIVGML. Residues 81–89 lie on the Cytoplasmic side of the membrane; sequence GYCGTVKRN. Residue Cys83 is the site of S-palmitoyl cysteine attachment. Residues 90–110 form a helical membrane-spanning segment; the sequence is LLLLAWYFGSLLVIFCVELAC. Residues 111–224 are Extracellular-facing; the sequence is GVWTYEQELM…RGTKQLQVLR (114 aa). A helical membrane pass occupies residues 225–245; the sequence is FLGISIGVTQILAMILTITLL. Topologically, residues 246–305 are cytoplasmic; the sequence is WALYYDRREPGTDQMMSLKNDNSQHLSCPSVELLKPSLSRIFEHTSMANSFNTHFEMEEL.

Belongs to the tetraspanin (TM4SF) family. In terms of assembly, component of a complex, at least composed of TSPAN12, FZD4 and norrin (NDP). Interacts (when palmitoylated) with ADAM10. Interacts with MMP14/MT1-MMP. In terms of processing, palmitoylated; required for interaction with ADAM10. The precise position of palmitoylated residues is unclear and occurs either on Cys-9, Cys-12 and/or Cys-83.

It localises to the cell membrane. Its function is as follows. Regulator of cell surface receptor signal transduction. Plays a central role in retinal vascularization by regulating norrin (NDP) signal transduction. Acts in concert with norrin (NDP) to promote FZD4 multimerization and subsequent activation of FZD4, leading to promote accumulation of beta-catenin (CTNNB1) and stimulate LEF/TCF-mediated transcriptional programs. Suprisingly, it only activates the norrin (NDP)-dependent activation of FZD4, while it does not activate the Wnt-dependent activation of FZD4, suggesting the existence of a Wnt-independent signaling that also promote accumulation the beta-catenin (CTNNB1). Acts as a regulator of membrane proteinases such as ADAM10 and MMP14/MT1-MMP. Activates ADAM10-dependent cleavage activity of amyloid precursor protein (APP). Activates MMP14/MT1-MMP-dependent cleavage activity. In Homo sapiens (Human), this protein is Tetraspanin-12 (TSPAN12).